Reading from the N-terminus, the 119-residue chain is Large ribosomal subunit protein uL18 (119 aa).

Belongs to the universal ribosomal protein uL18 family. Part of the 50S ribosomal subunit; part of the 5S rRNA/L5/L18/L25 subcomplex. Contacts the 5S and 23S rRNAs.

In terms of biological role, this is one of the proteins that bind and probably mediate the attachment of the 5S RNA into the large ribosomal subunit, where it forms part of the central protuberance. This is Large ribosomal subunit protein uL18 from Clostridium botulinum (strain Okra / Type B1).